We begin with the raw amino-acid sequence, 299 residues long: Nitrogenase iron protein (299 aa).

An ATP-binding site is contributed by 11–18 (GKGGIGKS). Cys99 serves as a coordination point for [4Fe-4S] cluster. Residue Arg102 is modified to ADP-ribosylarginine; by dinitrogenase reductase ADP-ribosyltransferase. Residue Cys133 participates in [4Fe-4S] cluster binding.

The protein belongs to the NifH/BchL/ChlL family. As to quaternary structure, homodimer. Requires [4Fe-4S] cluster as cofactor. In terms of processing, the reversible ADP-ribosylation of Arg-102 inactivates the nitrogenase reductase and regulates nitrogenase activity.

It carries out the reaction N2 + 8 reduced [2Fe-2S]-[ferredoxin] + 16 ATP + 16 H2O = H2 + 8 oxidized [2Fe-2S]-[ferredoxin] + 2 NH4(+) + 16 ADP + 16 phosphate + 6 H(+). Functionally, the key enzymatic reactions in nitrogen fixation are catalyzed by the nitrogenase complex, which has 2 components: the iron protein and the molybdenum-iron protein. The sequence is that of Nitrogenase iron protein from Rhodopseudomonas palustris (strain BisB5).